The primary structure comprises 172 residues: Cytidylate kinase (172 aa).

Position 7-15 (7-15 (GPPGSGTST)) interacts with ATP.

This sequence belongs to the cytidylate kinase family. Type 2 subfamily.

It localises to the cytoplasm. The catalysed reaction is CMP + ATP = CDP + ADP. The enzyme catalyses dCMP + ATP = dCDP + ADP. In Methanothrix thermoacetophila (strain DSM 6194 / JCM 14653 / NBRC 101360 / PT) (Methanosaeta thermophila), this protein is Cytidylate kinase.